We begin with the raw amino-acid sequence, 323 residues long: tRNA dimethylallyltransferase (323 aa).

Position 21–28 (21–28 (GPTACNKS)) interacts with ATP. 23 to 28 (TACNKS) lines the substrate pocket. Interaction with substrate tRNA stretches follow at residues 46-49 (DSAL), 171-175 (QRVLR), and 252-257 (RCVGYR).

It belongs to the IPP transferase family. Monomer. Mg(2+) serves as cofactor.

The catalysed reaction is adenosine(37) in tRNA + dimethylallyl diphosphate = N(6)-dimethylallyladenosine(37) in tRNA + diphosphate. Functionally, catalyzes the transfer of a dimethylallyl group onto the adenine at position 37 in tRNAs that read codons beginning with uridine, leading to the formation of N6-(dimethylallyl)adenosine (i(6)A). The polypeptide is tRNA dimethylallyltransferase (Buchnera aphidicola subsp. Baizongia pistaciae (strain Bp)).